The sequence spans 405 residues: Protochlorophyllide reductase A, chloroplastic (405 aa).

Residues 1-69 (MALQAASLVS…LRNNKAIIRA (69 aa)) constitute a chloroplast transit peptide.

Belongs to the short-chain dehydrogenases/reductases (SDR) family. POR subfamily. Forms large complexes including TOC33, pPORA and OEP161 during pPORA import into plastids at the plastid envelope membrane. Interacts with CPP1 during plastid import. As to expression, expressed in young seedlings. Not detected in leaves.

Its subcellular location is the plastid. The protein localises to the chloroplast. It catalyses the reaction chlorophyllide a + NADP(+) = protochlorophyllide a + NADPH + H(+). The protein operates within porphyrin-containing compound metabolism; chlorophyll biosynthesis. Its function is as follows. Phototransformation of protochlorophyllide (Pchlide) to chlorophyllide (Chlide). PORA may also function as a photoprotectant during the transitory stage from dark to light. Functions in skotomorphogenesis, photomorphogenesis and throughout the plant life under specific light conditions. In Arabidopsis thaliana (Mouse-ear cress), this protein is Protochlorophyllide reductase A, chloroplastic (PORA).